The sequence spans 1460 residues: Centrosomal protein of 164 kDa (1460 aa).

Residues 1–194 (MAGRPLRIGD…PSQGLKTSAY (194 aa)) form an interaction with ATRIP region. Positions 56–89 (APLPGEWKPCQDITGDIYYFNFANGQSMWDHPCD) constitute a WW domain. Residues 107–135 (GAIKKKKKKKEKKDKKDRDPPKSSLALGS) are disordered. The segment covering 109-119 (IKKKKKKKEKK) has biased composition (basic residues). S186 bears the Phosphoserine; by ATR and ATM mark. A Phosphoserine modification is found at S201. Disordered regions lie at residues 213–412 (GLGE…HGLD), 440–593 (AQQP…AALK), and 658–719 (EEAR…QKNR). Over residues 217–227 (ETNEEDEEESD) the composition is skewed to acidic residues. Residues 256-270 (ESLRTSQPEEKKDVS) show a composition bias toward basic and acidic residues. The span at 285–296 (SSPGADSSLSSA) shows a compositional bias: low complexity. 2 stretches are compositionally biased toward basic and acidic residues: residues 310–323 (LPEK…EPKI) and 357–367 (EGSRREEAAKE). Low complexity predominate over residues 453 to 464 (QSSQDELQSKQS). A compositionally biased stretch (basic and acidic residues) spans 465–481 (KGLEERLSPPLPHEERA). Residues 514-525 (SAASLSLQLSLQ) are compositionally biased toward low complexity. The span at 537–546 (EKGKEQHSQA) shows a compositional bias: basic and acidic residues. S566 is subject to Phosphoserine. 2 stretches are compositionally biased toward basic and acidic residues: residues 658–668 (EEARMREEESQ) and 686–719 (DQIR…QKNR). Residues 1154 to 1206 (GIKALEDMRKNLEKETRHLDEMKSAMRKGHNLLKKKEEKLNQLESSLWEEASD) adopt a coiled-coil conformation. Residues 1290–1310 (PPPLLASMPAQLPPRDPKSTP) form a disordered region. A phosphoserine mark is found at S1386, S1388, and S1443.

In terms of assembly, interacts (via N-terminus) with ATRIP. Interacts with ATM, ATR and MDC1. Interacts with XPA (via N-terminus) upon UV irradiation. Interacts with CEP83, CCDC92, TTBK2, DVL3, NPHP3 and weakly with NPHP4. Interacts with DZIP1. Phosphorylation at Ser-186 is induced upon DNA-damage caused by treatment with IR irradiation, UV irradiation, hydroxyurea or amphidicolin. Also MDC1-mediated chromatin remodeling is critical for DNA damage-induced phosphorylation. Expressed in several cell lines.

The protein localises to the cytoplasm. Its subcellular location is the cytoskeleton. The protein resides in the microtubule organizing center. It is found in the centrosome. It localises to the centriole. The protein localises to the nucleus. Functionally, plays a role in microtubule organization and/or maintenance for the formation of primary cilia (PC), a microtubule-based structure that protrudes from the surface of epithelial cells. Plays a critical role in G2/M checkpoint and nuclear divisions. A key player in the DNA damage-activated ATR/ATM signaling cascade since it is required for the proper phosphorylation of H2AX, RPA, CHEK2 and CHEK1. Plays a critical role in chromosome segregation, acting as a mediator required for the maintenance of genomic stability through modulation of MDC1, RPA and CHEK1. The sequence is that of Centrosomal protein of 164 kDa (CEP164) from Homo sapiens (Human).